The chain runs to 522 residues: Putative zinc finger protein 286B (522 aa).

The tract at residues 1–30 (METDLAEMPEKGVLSSQDSPHFQEKSTEEG) is disordered. 10 consecutive C2H2-type zinc fingers follow at residues 244–266 (HKCN…QRVH), 272–294 (YTCN…QRTH), 299–321 (FECR…QRIH), 327–349 (YECN…QLIH), 355–377 (YECN…QRTH), 383–405 (YKCQ…QRVH), 411–433 (YECS…QRIH), 439–461 (YECS…QRIH), 467–489 (YKCS…QRTH), and 495–517 (FRCN…QRVH).

Belongs to the krueppel C2H2-type zinc-finger protein family.

It is found in the nucleus. May be involved in transcriptional regulation. The chain is Putative zinc finger protein 286B (ZNF286B) from Homo sapiens (Human).